A 448-amino-acid chain; its full sequence is Velvet complex subunit 2 (448 aa).

Disordered stretches follow at residues 1 to 153 (MNSA…SKIE) and 224 to 306 (EPGT…NGYG). The segment covering 15–34 (PGPAYSSSAPPPIHTYQQHQ) has biased composition (low complexity). Composition is skewed to pro residues over residues 35–44 (HPPPPLPPPS) and 52–61 (PPLPPPPSAP). Residues 96–107 (APYQQSQPSQYP) show a composition bias toward low complexity. A compositionally biased stretch (pro residues) spans 116-132 (VPPPSQHDEPPPPPSSG). Positions 155–431 (GSGWKYSLDV…ANQGIKIPIR (277 aa)) constitute a Velvet domain. Over residues 260–292 (QQSYGPAPSYPPSSSYGPPQQYYPRHSGYSAEP) the composition is skewed to low complexity.

It belongs to the velvet family. VelB subfamily. Component of the heterotrimeric velvet complex composed of LAE1, VE1 and VELB; VE1 acting as a bridging protein between LAE1 and VEL2. Interacts with VE1. Forms a heterodimeric complex with VOS1; the formation of the VELB-VOS1 complex is light-dependent.

The protein localises to the nucleus. It localises to the cytoplasm. Functionally, component of the velvet transcription factor complex that controls sexual/asexual developmental ratio in response to light, promoting sexual development in the darkness while stimulating asexual sporulation under illumination. The velvet complex acts as a global regulator for secondary metabolite gene expression. Component of the VELB-VOS1 heterodimeric complex that plays a dual role in activating genes associated with spore maturation and repressing certain development-associated genes. The VELB-VOS1 complex binds DNA through the DNA-binding domain of VOS1 that recognizes an 11-nucleotide consensus sequence 5'-CTGGCCGCGGC-3' consisting of two motifs in the promoters of key developmental regulatory genes. Controls the expression of the fumonisins gene cluster. Involved in cell wall integrity, cell surface hydrophobicity, hyphal polarity and conidiation pattern. Involved in oxidative stress resistance by positively regulating the transcription of the catalase-encoding gene CAT2. This is Velvet complex subunit 2 from Gibberella moniliformis (strain M3125 / FGSC 7600) (Maize ear and stalk rot fungus).